The sequence spans 434 residues: Glutamate-1-semialdehyde 2,1-aminomutase (434 aa).

Residue K271 is modified to N6-(pyridoxal phosphate)lysine.

This sequence belongs to the class-III pyridoxal-phosphate-dependent aminotransferase family. HemL subfamily. As to quaternary structure, homodimer. The cofactor is pyridoxal 5'-phosphate.

It is found in the cytoplasm. The catalysed reaction is (S)-4-amino-5-oxopentanoate = 5-aminolevulinate. It participates in porphyrin-containing compound metabolism; protoporphyrin-IX biosynthesis; 5-aminolevulinate from L-glutamyl-tRNA(Glu): step 2/2. The protein operates within porphyrin-containing compound metabolism; chlorophyll biosynthesis. This chain is Glutamate-1-semialdehyde 2,1-aminomutase, found in Prochlorococcus marinus (strain MIT 9312).